The following is a 409-amino-acid chain: Imidazolonepropionase (409 aa).

Fe(3+) contacts are provided by His-70 and His-72. Residues His-70 and His-72 each coordinate Zn(2+). Residues Arg-79, Tyr-137, and His-164 each coordinate 4-imidazolone-5-propanoate. Residue Tyr-137 coordinates N-formimidoyl-L-glutamate. A Fe(3+)-binding site is contributed by His-225. His-225 lines the Zn(2+) pocket. Position 228 (Gln-228) interacts with 4-imidazolone-5-propanoate. Asn-314 and Gly-316 together coordinate N-formimidoyl-L-glutamate. A 4-imidazolone-5-propanoate-binding site is contributed by Thr-317.

It belongs to the metallo-dependent hydrolases superfamily. HutI family. Zn(2+) is required as a cofactor. Requires Fe(3+) as cofactor.

The protein localises to the cytoplasm. It catalyses the reaction 4-imidazolone-5-propanoate + H2O = N-formimidoyl-L-glutamate. It functions in the pathway amino-acid degradation; L-histidine degradation into L-glutamate; N-formimidoyl-L-glutamate from L-histidine: step 3/3. Catalyzes the hydrolytic cleavage of the carbon-nitrogen bond in imidazolone-5-propanoate to yield N-formimidoyl-L-glutamate. It is the third step in the universal histidine degradation pathway. The protein is Imidazolonepropionase of Paenarthrobacter aurescens (strain TC1).